The chain runs to 254 residues: Reaction center protein L chain (254 aa).

3 consecutive transmembrane segments (helical) span residues 10 to 32 (FFGVTAAFFIMLGTALIIWGAAL), 60 to 88 (GGLWQIITVCAIGAFGSWALREVEISRKL), and 93 to 115 (HVPAAFSVAIFAYVTLEVIRPLL). (7R,8Z)-bacteriochlorophyll b contacts are provided by H130 and H150. The chain crosses the membrane as a helical span at residues 148 to 175 (PMHMVAVTLFFTTTLALALHGSLVLAAI). H167 lines the Fe cation pocket. F193 lines the a ubiquinone pocket. Residues 202-227 (GTLGIHRLGLFLALGAGFASATCILL) form a helical membrane-spanning segment. H207 is a binding site for Fe cation.

This sequence belongs to the reaction center PufL/M/PsbA/D family. Reaction center is composed of four bacteriochlorophylls, two bacteriopheophytins, two ubiquinones, one iron, and two highly hydrophobic polypeptide chains (designated L and M).

The protein resides in the cell inner membrane. Functionally, the reaction center is a membrane-bound complex that mediates the initial photochemical event in the electron transfer process of photosynthesis. The sequence is that of Reaction center protein L chain (pufL) from Acidiphilium organovorum.